A 447-amino-acid chain; its full sequence is UDP-glycosyltransferase 79B9 (447 aa).

Residues Ser-260, 319–321, 336–344, and 358–361 each bind UDP-alpha-D-glucose; these read VQQ, HCGFGSMWE, and LCDQ.

It belongs to the UDP-glycosyltransferase family.

The chain is UDP-glycosyltransferase 79B9 (UGT79B9) from Arabidopsis thaliana (Mouse-ear cress).